Reading from the N-terminus, the 91-residue chain is Teretoxin Tan6.2 (91 aa).

Residues 1 to 21 form the signal peptide; sequence MATSGRLLCVCLVLGLVFGSL. Positions 22-50 are excised as a propeptide; that stretch reads GYPVMEKKRAGKNFDLGTIANWAWQIGEK.

It belongs to the teretoxin M (TM) superfamily. In terms of processing, contains 3 disulfide bonds. In terms of tissue distribution, expressed by the venom duct.

Its subcellular location is the secreted. The polypeptide is Teretoxin Tan6.2 (Terebra anilis (Auger snail)).